The following is a 119-amino-acid chain: Large ribosomal subunit protein uL18 (119 aa).

Belongs to the universal ribosomal protein uL18 family. In terms of assembly, part of the 50S ribosomal subunit; part of the 5S rRNA/L5/L18/L25 subcomplex. Contacts the 5S and 23S rRNAs.

This is one of the proteins that bind and probably mediate the attachment of the 5S RNA into the large ribosomal subunit, where it forms part of the central protuberance. This is Large ribosomal subunit protein uL18 from Ruegeria pomeroyi (strain ATCC 700808 / DSM 15171 / DSS-3) (Silicibacter pomeroyi).